Reading from the N-terminus, the 337-residue chain is Glyceraldehyde-3-phosphate dehydrogenase (337 aa).

NAD(+) contacts are provided by residues 13-14, D35, and R80; that span reads RI. D-glyceraldehyde 3-phosphate contacts are provided by residues 151-153, T182, 211-212, and R234; these read SCT and TG. Catalysis depends on C152, which acts as the Nucleophile. An NAD(+)-binding site is contributed by N316.

It belongs to the glyceraldehyde-3-phosphate dehydrogenase family. Homotetramer.

Its subcellular location is the cytoplasm. The enzyme catalyses D-glyceraldehyde 3-phosphate + phosphate + NAD(+) = (2R)-3-phospho-glyceroyl phosphate + NADH + H(+). Its pathway is carbohydrate degradation; glycolysis; pyruvate from D-glyceraldehyde 3-phosphate: step 1/5. The chain is Glyceraldehyde-3-phosphate dehydrogenase (GPD1) from Monascus purpureus (Red mold).